The following is a 190-amino-acid chain: uncharacterized protein (190 aa).

This is an uncharacterized protein from Homo sapiens (Human).